The chain runs to 201 residues: Aminoglycoside N(6')-acetyltransferase type 1 (201 aa).

Residues 25–192 (VTLRLMTEHD…PAVYMVQTRQ (168 aa)) enclose the N-acetyltransferase domain. Substrate contacts are provided by Trp-51 and Asp-154. Residue Asn-159 participates in acetyl-CoA binding.

As to quaternary structure, homodimer.

The catalysed reaction is kanamycin B + acetyl-CoA = N(6')-acetylkanamycin B + CoA + H(+). Its function is as follows. Catalyzes the transfer of an acetyl group from acetyl-CoA to the 6'-amino group of aminoglycoside molecules conferring resistance to antibiotics containing the purpurosamine ring including amikacin and kanamycin. The sequence is that of Aminoglycoside N(6')-acetyltransferase type 1 (aacA4) from Serratia marcescens.